A 349-amino-acid chain; its full sequence is Nicotinate-nucleotide--dimethylbenzimidazole phosphoribosyltransferase (349 aa).

Glu316 functions as the Proton acceptor in the catalytic mechanism.

Belongs to the CobT family.

It carries out the reaction 5,6-dimethylbenzimidazole + nicotinate beta-D-ribonucleotide = alpha-ribazole 5'-phosphate + nicotinate + H(+). Its pathway is nucleoside biosynthesis; alpha-ribazole biosynthesis; alpha-ribazole from 5,6-dimethylbenzimidazole: step 1/2. In terms of biological role, catalyzes the synthesis of alpha-ribazole-5'-phosphate from nicotinate mononucleotide (NAMN) and 5,6-dimethylbenzimidazole (DMB). This is Nicotinate-nucleotide--dimethylbenzimidazole phosphoribosyltransferase from Photorhabdus laumondii subsp. laumondii (strain DSM 15139 / CIP 105565 / TT01) (Photorhabdus luminescens subsp. laumondii).